The sequence spans 190 residues: MFNILKQVSDYAKGSIQAAKYIGEGLSVTFDHMRRRPITVQYPYEKLIPSERYRGRIHFEFDKCIACEVCVRVCPINLPVVDWTFNKEIKKKELKHYSIDFGVCIFCGNCVEYCPTNCLSMTEEYELASYDRHELNYDNVALGRLPYKVTQDPMVTPLRELGYLPKGVIEPHDLPAGSQRAGKRPEEITD.

4Fe-4S ferredoxin-type domains lie at 55–84 (GRIH…VDWT) and 95–124 (KHYS…MTEE). 8 residues coordinate [4Fe-4S] cluster: Cys64, Cys67, Cys70, Cys74, Cys104, Cys107, Cys110, and Cys114. Positions 169-190 (IEPHDLPAGSQRAGKRPEEITD) are disordered.

This sequence belongs to the complex I 23 kDa subunit family. As to quaternary structure, NDH-1 is composed of at least 11 different subunits. It depends on [4Fe-4S] cluster as a cofactor.

It is found in the cellular thylakoid membrane. It catalyses the reaction a plastoquinone + NADH + (n+1) H(+)(in) = a plastoquinol + NAD(+) + n H(+)(out). The catalysed reaction is a plastoquinone + NADPH + (n+1) H(+)(in) = a plastoquinol + NADP(+) + n H(+)(out). Its function is as follows. NDH-1 shuttles electrons from an unknown electron donor, via FMN and iron-sulfur (Fe-S) centers, to quinones in the respiratory and/or the photosynthetic chain. The immediate electron acceptor for the enzyme in this species is believed to be plastoquinone. Couples the redox reaction to proton translocation, and thus conserves the redox energy in a proton gradient. The protein is NAD(P)H-quinone oxidoreductase subunit I of Microcystis aeruginosa (strain NIES-843 / IAM M-2473).